Reading from the N-terminus, the 564-residue chain is Protein CPR-5 (564 aa).

Positions 1-87 (MEALLLPPSP…TSNSNSTKRV (87 aa)) are disordered. Residues 12–28 (PQNQITNPANSKPNHQS) show a composition bias toward polar residues. Basic and acidic residues predominate over residues 29–38 (GDVHKDETMM). Over residues 69 to 84 (SSSYCSTSSTSNSNST) the composition is skewed to low complexity. 5 helical membrane passes run 347–367 (IMDW…LGVY), 411–431 (VRVW…TYFL), 443–463 (PISF…KLCV), 472–492 (LWLI…VFTL), and 526–546 (VYVV…FATF).

Interacts with SIM and SMR1. In terms of tissue distribution, ubiquitous.

Its subcellular location is the membrane. The protein localises to the nucleus membrane. In terms of biological role, may play a role in transcriptional processes. Negatively regulates the senescence and chlorotic lesions induced by biotic (e.g. pathogens) and abiotic (e.g. sugars, darkness) agents, probably by controlling programmed cell death (pcd). Negative regulator of plant programmed cell death (PCD) and effector-triggered immunity (ETI). Promotes cell division and endoreduplication (e.g. in trichomes). The protein is Protein CPR-5 of Arabidopsis thaliana (Mouse-ear cress).